The chain runs to 364 residues: Phosrestin-2 (364 aa).

This sequence belongs to the arrestin family. Phosphorylated, but does not undergo light-induced phosphorylation. As to expression, expressed specifically and abundantly in photoreceptor cells in retina and ocelli.

The protein localises to the cell projection. The protein resides in the rhabdomere. Functionally, regulates photoreceptor cell deactivation. Arr1 and Arr2 proteins are mediators of rhodopsin inactivation and are essential for the termination of the phototransduction cascade. Involved in regulating normal cycles of per nuclear accumulation in brain circadian neurons and thus is important for normal circadian behavior. In the dark, functions with Arr2 to promote the formation of cytosolic Bdbt foci, which are required for dco localization to photoreceptor nuclei where it phosphorylates and activates degradation of per. The polypeptide is Phosrestin-2 (Arr1) (Drosophila melanogaster (Fruit fly)).